The primary structure comprises 805 residues: Mediator of RNA polymerase II transcription subunit 25 (805 aa).

2 disordered regions span residues 430-455 (GSAQNTQNSAPSSFTSTAPSMSGQTV) and 786-805 (SQSQGSSQGLPITPGGGFMN). 2 stretches are compositionally biased toward low complexity: residues 438–451 (SAPSSFTSTAPSMS) and 786–795 (SQSQGSSQGL).

Belongs to the Mediator complex subunit 25 family. Interacts with MYC2 (via N-terminus). MED25 competes with JAZ7 for binding to MYC2.

Its function is as follows. Component of the Mediator complex, a coactivator involved in the regulated transcription of nearly all RNA polymerase II-dependent genes. Mediator functions as a bridge to convey information from gene-specific regulatory proteins to the basal RNA polymerase II transcription machinery. Mediator is recruited to promoters by direct interactions with regulatory proteins and serves as a scaffold for the assembly of a functional pre-initiation complex with RNA polymerase II and the general transcription factors. Plays a positive role in wound-induced activation of jasmonate-responsive genes whose promoters are targeted by MYC2. This is Mediator of RNA polymerase II transcription subunit 25 from Solanum lycopersicum (Tomato).